The following is a 526-amino-acid chain: Peptide chain release factor 3 (526 aa).

Residues 8–277 (GKRRTFAIIS…GLTDWAPAPQ (270 aa)) form the tr-type G domain. GTP is bound by residues 17–24 (SHPDAGKT), 85–89 (DTPGH), and 139–142 (NKLD).

It belongs to the TRAFAC class translation factor GTPase superfamily. Classic translation factor GTPase family. PrfC subfamily.

It is found in the cytoplasm. Increases the formation of ribosomal termination complexes and stimulates activities of RF-1 and RF-2. It binds guanine nucleotides and has strong preference for UGA stop codons. It may interact directly with the ribosome. The stimulation of RF-1 and RF-2 is significantly reduced by GTP and GDP, but not by GMP. The protein is Peptide chain release factor 3 of Aliivibrio fischeri (strain MJ11) (Vibrio fischeri).